The following is a 504-amino-acid chain: UDP-N-acetylglucosamine--peptide N-acetylglucosaminyltransferase GtfA subunit (504 aa).

16-19 is a binding site for UDP; that stretch reads GVEY. His243 is an N-acetyl-D-glucosamine binding site. Residue 385 to 386 participates in UDP binding; the sequence is HK. Residue 405–408 coordinates N-acetyl-D-glucosamine; sequence EGFG.

It belongs to the glycosyltransferase group 1 family. Glycosyltransferase 4 subfamily. In terms of assembly, interacts with stabilizing protein GtfB (Gtf1), probably via the N-terminus of this protein; probably forms a heterotetramer with 2 subunits each of GtfA and GtfB. Part of the accessory SecA2/SecY2 protein translocation apparatus.

It is found in the cytoplasm. Its subcellular location is the cell membrane. The enzyme catalyses L-seryl-[protein] + UDP-N-acetyl-alpha-D-glucosamine = 3-O-[N-acetyl-alpha-D-glucosaminyl]-L-seryl-[protein] + UDP + H(+). The protein operates within protein modification; protein glycosylation. Functionally, required for polymorphic O-glycosylation of serine-rich repeat protein Fap1. Catalyzes the first step in glycosylation by transferring N-acetylglucosamine from UDP-GlcNAc to serine residues in Fap1. Part of the accessory SecA2/SecY2 system specifically required to export Fap1, a serine-rich fimbrial adhesin encoded upstream in the same operon. The GtfA-GtfB (Gtf1-Gtf2 in this bacteria) complex adds GlcNAc from UDP-GlcNAc to Fap1, attaching the first sugar residue. Cannot use not UDP-Glc as substrate. This subunit has very low glycosyltransferase activity; the GtfB stabilizing protein enhances membrane association, protease resistance and glycosyltransferase activity. In Streptococcus parasanguinis, this protein is UDP-N-acetylglucosamine--peptide N-acetylglucosaminyltransferase GtfA subunit.